The following is a 1295-amino-acid chain: Protein glp-1 (1295 aa).

The N-terminal stretch at 1–15 (MRVLLILLAFFAPIA) is a signal peptide. The Extracellular segment spans residues 16-764 (SQLMGGECGR…NEIDEGWSRS (749 aa)). EGF-like domains lie at 19–58 (MGGE…AFCE), 117–152 (GVNP…SYCE), 154–190 (GIDH…RYCE), and 190–230 (ERTE…EFCN). 37 disulfide bridges follow: C23–C35, C29–C46, C48–C57, C121–C131, C126–C140, C142–C151, C158–C169, C163–C178, C180–C189, C201–C206, C220–C229, C236–C248, C242–C257, C259–C268, C275–C286, C280–C296, C298–C307, C329–C342, C336–C347, C349–C358, C373–C384, C378–C394, C396–C405, C411–C422, C416–C431, C433–C442, C450–C461, C455–C467, C469–C478, C496–C519, C501–C514, C510–C526, C536–C560, C542–C555, C551–C567, C582–C595, and C591–C607. Residues 232-269 (DKNECLIEETCVNNSTCFNLHGDFTCTCKPGYAGKYCE) form the EGF-like 5; calcium-binding domain. N-linked (GlcNAc...) asparagine glycans are attached at residues N244 and N245. EGF-like domains are found at residues 271–308 (AIDM…QRCE), 316–359 (GGIH…DRCE), 369–406 (DIQS…LNCE), 407–443 (QHLL…DYCE), and 446–479 (DRQL…PTCE). Residue N333 is glycosylated (N-linked (GlcNAc...) asparagine). Residue N381 is glycosylated (N-linked (GlcNAc...) asparagine). LNR repeat units lie at residues 496–532 (CEQR…GQRP), 536–577 (CQYP…CPAH), and 581–612 (HCIE…NGTE). N609 and N675 each carry an N-linked (GlcNAc...) asparagine glycan. A helical transmembrane segment spans residues 765 to 786 (QVILFACIAFLAFGTVVAGVIA). At 787-1295 (KNGPERSRKR…AEQMNGSFYC (509 aa)) the chain is on the cytoplasmic side. ANK repeat units follow at residues 961–990 (DENT…NPTI), 994–1023 (SERS…LLKE), 1030–1062 (NGMT…KLDY), 1074–1103 (KGRT…NKDK), and 1107–1136 (DGRT…SLGI). Residues 1177–1244 (IVKSGHGAKS…TTSTPNRMET (68 aa)) are disordered. The span at 1201 to 1210 (KTPTSAASSR) shows a compositional bias: polar residues. The span at 1221-1239 (DGSFSSPSPHYYPTTTSTP) shows a compositional bias: low complexity.

In terms of assembly, interacts with sel-10. When activated, the glp-1/Notch intracellular domain (NICD) may become a component of a complex consisting of at least the NICD, lag-1 and lag-3. Upon binding its ligands, it is cleaved (S2 cleavage) in its extracellular domain, close to the transmembrane domain. S2 cleavage is probably mediated by the metalloproteases adm-4 and sup-17. It is then cleaved (S3 cleavage) downstream of its transmembrane domain, releasing it from the cell membrane; S3 cleavage requires a multiprotein gamma-secretase complex, which may include presenilin sel-12. As to expression, expressed in the distal mitotic region of the germ line. May be absent from the gonadal distal tip cell (DTC).

The protein localises to the cell membrane. It localises to the cell projection. The protein resides in the axon. Its subcellular location is the nucleus. Essential signaling protein which has a major role in germline and embryonic development; involved in cell fate decisions that require cell-cell interactions. Probable membrane-bound receptor for putative ligands lag-2 and apx-1. Upon ligand activation, and releasing from the cell membrane, the glp-1/Notch intracellular domain (NICD) probably forms a transcriptional activator complex with lag-1 and lag-3 and regulates expression of various genes; targets in the germline include lst-1 and sygl-1. Involved in the specification of the cell fates of the blastomeres, ABa and ABp. Proper signaling by glp-1 induces ABa descendants to produce anterior pharyngeal cells, and ABp descendants to adopt a different fate. Contributes to the establishment of the dorsal-ventral axis in early embryos. Required in postmitotic neurons in order to maintain the developmentally arrested larval state known as dauer, probably in response to lag-2. Regulates germ cell mitotic proliferation probably by regulating MAP kinase phosphatase lip-1 expression. Required for oocyte growth control. Plays a negative role in lifespan. The polypeptide is Protein glp-1 (Caenorhabditis elegans).